The primary structure comprises 136 residues: Putative LysR family substrate binding domain-containing protein YagP (136 aa).

It belongs to the LysR transcriptional regulatory family.

In Escherichia coli (strain K12), this protein is Putative LysR family substrate binding domain-containing protein YagP (yagP).